The primary structure comprises 235 residues: Exosome complex component RRP46 (235 aa).

The segment at 1-21 is disordered; it reads MEGAKRADANLLTDTGTESSP. Residues 12–21 are compositionally biased toward polar residues; sequence LTDTGTESSP. A phosphoserine mark is found at serine 20 and serine 23.

Belongs to the RNase PH family. In terms of assembly, homodimer. Component of the RNA exosome core complex (Exo-9), composed of EXOSC1, EXOSC2, EXOSC3, EXOSC4, EXOSC5, EXOSC6, EXOSC7, EXOSC8 and EXOSC9; within the complex interacts with EXOSC3, EXOSC8, and EXOSC9. The catalytically inactive RNA exosome core complex (Exo-9) associates with the catalytic subunit EXOSC10/RRP6. Exo-9 may associate with DIS3 to form the nucleolar exosome complex, or DIS3L to form the cytoplasmic exosome complex. Exo-9 is formed by a hexameric base ring consisting of the heterodimers EXOSC4-EXOSC9, EXOSC5-EXOSC8 and EXOSC6-EXOSC7, and a cap ring consisting of EXOSC1, EXOSC2 and EXOSC3. The RNA exosome complex associates with cofactors C1D/RRP47, MPHOSPH6/MPP6 and MTREX/MTR4. Interacts with GTPBP1. Interacts with ZC3HAV1. Interacts with DDX17 only in the presence of ZC3HAV1 in an RNA-independent manner.

Its subcellular location is the nucleus. It is found in the nucleolus. The protein localises to the cytoplasm. Its function is as follows. Non-catalytic component of the RNA exosome complex which has 3'-&gt;5' exoribonuclease activity and participates in a multitude of cellular RNA processing and degradation events. In the nucleus, the RNA exosome complex is involved in proper maturation of stable RNA species such as rRNA, snRNA and snoRNA, in the elimination of RNA processing by-products and non-coding 'pervasive' transcripts, such as antisense RNA species and promoter-upstream transcripts (PROMPTs), and of mRNAs with processing defects, thereby limiting or excluding their export to the cytoplasm. The RNA exosome may be involved in Ig class switch recombination (CSR) and/or Ig variable region somatic hypermutation (SHM) by targeting AICDA deamination activity to transcribed dsDNA substrates. In the cytoplasm, the RNA exosome complex is involved in general mRNA turnover and specifically degrades inherently unstable mRNAs containing AU-rich elements (AREs) within their 3' untranslated regions, and in RNA surveillance pathways, preventing translation of aberrant mRNAs. It seems to be involved in degradation of histone mRNA. The catalytic inactive RNA exosome core complex of 9 subunits (Exo-9) is proposed to play a pivotal role in the binding and presentation of RNA for ribonucleolysis, and to serve as a scaffold for the association with catalytic subunits and accessory proteins or complexes. In vitro, EXOSC5 does not bind or digest single-stranded RNA and binds to double-stranded DNA without detectable DNase activity. The protein is Exosome complex component RRP46 (Exosc5) of Mus musculus (Mouse).